Consider the following 202-residue polypeptide: Cytochrome c oxidase assembly protein CtaG (202 aa).

At 1 to 14 the chain is on the cytoplasmic side; the sequence is MSENAGTPKKQGRN. A helical; Signal-anchor for type II membrane protein membrane pass occupies residues 15–37; that stretch reads NGAVVMMCLSFVFGMGAMSYAAV. Residues 38 to 202 lie on the Periplasmic side of the membrane; sequence PLYRIFCQVT…GGAEKIEKKL (165 aa).

Belongs to the COX11/CtaG family.

Its subcellular location is the cell inner membrane. Its function is as follows. Exerts its effect at some terminal stage of cytochrome c oxidase synthesis, probably by being involved in the insertion of the copper B into subunit I. The sequence is that of Cytochrome c oxidase assembly protein CtaG from Rhizobium johnstonii (strain DSM 114642 / LMG 32736 / 3841) (Rhizobium leguminosarum bv. viciae).